The primary structure comprises 529 residues: Cytochrome P450 monooxygenase okaD (529 aa).

The helical transmembrane segment at 13–35 threads the bilayer; it reads LPAQHLLASLALVGALLSVGYLL. Cys435 serves as a coordination point for heme.

This sequence belongs to the cytochrome P450 family. Requires heme as cofactor.

The protein localises to the membrane. It carries out the reaction okaramine C + 2 reduced [NADPH--hemoprotein reductase] + 2 O2 = okaramine A + 2 oxidized [NADPH--hemoprotein reductase] + 4 H2O + 2 H(+). Its pathway is alkaloid biosynthesis. Cytochrome P450 monooxygenase; part of the gene cluster that mediates the biosynthesis of okaramine B, a prenylated indole alkaloid that possesses an unusual octacyclic ring system, including a four-membered azetidine ring and an eight-membered azocine ring, and that exhibits insecticidal activity against silkworm larvae. Within the pathway, okaD likely catalyzes a key step in forming the eight-membered ring of okaramine A using as substrate okaramine C. The biosynthesis begins with the NRPS okaA that condenses two tryptophan molecules into cyclo(L-Trp-L-Trp). Prenylation by the prenyltransferase okaC then leads to the formation of cyclo(N8-(alpha,alpha-dimethylallyl)-L-Trp-6a-(alpha,alpha-dime-thylallyl)-L-Trp). This is followed by indole 2,3-epoxidation by the FAD-dependent monooxygenase okaB to facilitate the formation of the hexahydropyrrolo[2,3-b]indole (HPI) moiety of okaramine C. The cytochrome P450 monooxygenase okaD then likely catalyzes formation of the eight-membered ring of okaramine A. The dioxygenase okaE further forms the unusual 2-dimethyl-3-methyl-azetidine ring to yield 12-deshydroxyl okaramine E, as well as the hydroxylation of 12-deshydroxyl okaramine E to produce okaramine E. The cytochrome P450 monoxygenase okaG converts 12-deshydroxyl okaramine E into 3-desmethyl okaramine B which is further methylated by the methyltransferase okaF into okaramine B. In a shunt pathway, okaG and okaF together are also able to convert okaramine E into okaramine D. Okaramine H is produced by nonenzymatic conversion from okaramine A. The sequence is that of Cytochrome P450 monooxygenase okaD from Penicillium ochrochloron.